The chain runs to 239 residues: Major prion protein (239 aa).

The signal sequence occupies residues 1–15 (MLVLFVATWSDLGLC). The segment at 15 to 98 (CKKRPKPGGW…NQWNKPSKPK (84 aa)) is disordered. Positions 16-31 (KKRPKPGGWNTGGSRY) are interaction with ADGRG6. The segment at 16-222 (KKRPKPGGWN…ESQAYYQRGS (207 aa)) is interaction with GRB2, ERI3 and SYN1. 5 consecutive repeat copies span residues 44–51 (PQSGGWGQ), 52–59 (PHGGGWGQ), 60–67 (PHGGGWGQ), 68–75 (PHGGGWGQ), and 76–83 (PHGGGWGQ). Positions 44–83 (PQSGGWGQPHGGGWGQPHGGGWGQPHGGGWGQPHGGGWGQ) are 5 X 8 AA tandem repeats of P-H-G-G-G-W-G-Q. The segment covering 47–87 (GGWGQPHGGGWGQPHGGGWGQPHGGGWGQPHGGGWGQGGGT) has biased composition (gly residues). Cu(2+) is bound by residues H53, G54, G55, H61, G62, G63, H69, G70, G71, H77, G78, and G79. A disulfide bond links C171 and C206. 2 N-linked (GlcNAc...) asparagine glycosylation sites follow: N173 and N189. Residue S222 is the site of GPI-anchor amidated serine attachment. The propeptide at 223-239 (SMVLFSSPPVILLISFL) is removed in mature form.

The protein belongs to the prion family. As to quaternary structure, monomer and homodimer. Has a tendency to aggregate into amyloid fibrils containing a cross-beta spine, formed by a steric zipper of superposed beta-strands. Soluble oligomers may represent an intermediate stage on the path to fibril formation. Copper binding may promote oligomerization. Interacts with GRB2, APP, ERI3/PRNPIP and SYN1. Mislocalized cytosolically exposed PrP interacts with MGRN1; this interaction alters MGRN1 subcellular location and causes lysosomal enlargement. Interacts with APP. Interacts with KIAA1191. Interacts with ADGRG6.

It localises to the cell membrane. Its subcellular location is the golgi apparatus. Its primary physiological function is unclear. May play a role in neuronal development and synaptic plasticity. May be required for neuronal myelin sheath maintenance. May promote myelin homeostasis through acting as an agonist for ADGRG6 receptor. May play a role in iron uptake and iron homeostasis. Soluble oligomers are toxic to cultured neuroblastoma cells and induce apoptosis (in vitro). Association with GPC1 (via its heparan sulfate chains) targets PRNP to lipid rafts. Also provides Cu(2+) or Zn(2+) for the ascorbate-mediated GPC1 deaminase degradation of its heparan sulfate side chains. The polypeptide is Major prion protein (PRNP) (Aotus trivirgatus (Three-striped night monkey)).